The primary structure comprises 206 residues: Glutathione S-transferase class-mu 28 kDa isozyme (206 aa).

Residues 1-81 (VKLIYFNGRG…FIARKHNMMG (81 aa)) form the GST N-terminal domain. Glutathione-binding positions include tyrosine 5, 5–6 (YF), arginine 11, 36–40 (WPKIK), leucine 48, 50–51 (IV), and 65–66 (ES). Positions 83–206 (TDDEYYIIEK…YLSERHATAF (124 aa)) constitute a GST C-terminal domain.

Belongs to the GST superfamily. Mu family. In terms of assembly, homodimer.

The enzyme catalyses RX + glutathione = an S-substituted glutathione + a halide anion + H(+). Conjugation of reduced glutathione to a wide number of exogenous and endogenous hydrophobic electrophiles. In terms of biological role, GST isoenzymes appear to play a central role in the parasite detoxification system. Other functions are also suspected including a role in increasing the solubility of haematin in the parasite gut. In Schistosoma japonicum (Blood fluke), this protein is Glutathione S-transferase class-mu 28 kDa isozyme.